A 340-amino-acid polypeptide reads, in one-letter code: Protein-arginine kinase (340 aa).

One can recognise a Phosphagen kinase C-terminal domain in the interval 21 to 242; it reads VVLSSRIRLA…EQIIMQERVA (222 aa). ATP-binding positions include 24 to 28, H79, R113, 164 to 168, and 195 to 200; these read SSRIR, RASVM, and RGIYGE.

The protein belongs to the ATP:guanido phosphotransferase family.

It catalyses the reaction L-arginyl-[protein] + ATP = N(omega)-phospho-L-arginyl-[protein] + ADP + H(+). Its function is as follows. Catalyzes the specific phosphorylation of arginine residues in proteins. This is Protein-arginine kinase from Listeria welshimeri serovar 6b (strain ATCC 35897 / DSM 20650 / CCUG 15529 / CIP 8149 / NCTC 11857 / SLCC 5334 / V8).